The sequence spans 973 residues: MASILDEYENSLSRSAVLQPGCPSVGIPHSGYVNAQLEKEVPIFTKQRIDFTPSERITSLVVSSNQLCMSLGKDTLLRIDLGKANEPNHVELGRKDDAKVHKMFLDHTGSHLLIALSSTEVLYVNRNGQKVRPLARWKGQLVESVGWNKALGTESSTGPILVGTAQGHIFEAELSASEGGLFGPAPDLYFRPLYVLNEEGGPAPVCSLEAERGPDGRSFVIATTRQRLFQFIGRAAEGAEAQGFSGLFAAYTDHPPPFREFPSNLGYSELAFYTPKLRSAPRAFAWMMGDGVLYGALDCGRPDSLLSEERVWEYPEGVGPGASPPLAIVLTQFHFLLLLADRVEAVCTLTGQVVLRDHFLEKFGPLKHMVKDSSTGQLWAYTERAVFRYHVQREARDVWRTYLDMNRFDLAKEYCRERPDCLDTVLAREADFCFRQRRYLESARCYALTQSYFEEIALKFLEARQEEALAEFLQRKLASLKPAERTQATLLTTWLTELYLSRLGALQGDPEALTLYRETKECFRTFLSSPRHKEWLFASRASIHELLASHGDTEHMVYFAVIMQDYERVVAYHCQHEAYEEALAVLARHRDPQLFYKFSPILIRHIPRQLVDAWIEMGSRLDARQLIPALVNYSQGGEVQQVSQAIRYMEFCVNVLGETEQAIHNYLLSLYARGRPDSLLAYLEQAGASPHRVHYDLKYALRLCAEHGHHRACVHVYKVLELYEEAVDLALQVDVDLAKQCADLPEEDEELRKKLWLKIARHVVQEEEDVQTAMACLASCPLLKIEDVLPFFPDFVTIDHFKEAICSSLKAYNHHIQELQREMEEATASAQRIRRDLQELRGRYGTVEPQDKCATCDFPLLNRPFYLFLCGHMFHADCLLQAVRPGLPAYKQARLEELQRKLGAAPPPAKGSARAKEAEGGAATAGPSREQLKADLDELVAAECVYCGELMIRSIDRPFIDPQRYEEEQLSWL.

Alanine 2 is modified (N-acetylalanine). Phosphoserine occurs at positions 3, 11, and 13. An N6-acetyllysine modification is found at lysine 362. The stretch at 454–481 forms a coiled coil; it reads EEIALKFLEARQEEALAEFLQRKLASLK. One copy of the CHCR repeat lies at 618-772; sequence GSRLDARQLI…VVQEEEDVQT (155 aa). Position 689 is a phosphoserine (serine 689). Residues 802–848 are a coiled coil; it reads KEAICSSLKAYNHHIQELQREMEEATASAQRIRRDLQELRGRYGTVE. The RING-type zinc finger occupies 853–947; that stretch reads CATCDFPLLN…ELVAAECVYC (95 aa). Residues 903-929 form a disordered region; it reads GAAPPPAKGSARAKEAEGGAATAGPSR. Serine 912 is modified (phosphoserine).

Belongs to the VPS18 family. Core component of at least two putative endosomal tethering complexes, the homotypic fusion and vacuole protein sorting (HOPS) complex and the class C core vacuole/endosome tethering (CORVET) complex. Their common core is composed of the class C Vps proteins VPS11, VPS16, VPS18 and VPS33A, which in HOPS further associates with VPS39 and VPS41 and in CORVET with VPS8 and TGFBRAP1. Interacts with RAB5C. Interacts with HOOK1. Interacts with STX7, MON1B. Associates with adaptor protein complex 3 (AP-3) and clathrin:AP-3 complexes. Interacts with SYNPO2. Interacts with PLEKHM1. As to expression, ubiquitous. Expression was highest in heart and low in lung.

The protein localises to the late endosome membrane. It is found in the lysosome membrane. It localises to the early endosome. The protein resides in the cytoplasmic vesicle. Its subcellular location is the autophagosome. The protein localises to the clathrin-coated vesicle. Its function is as follows. Plays a role in vesicle-mediated protein trafficking to lysosomal compartments including the endocytic membrane transport and autophagic pathways. Believed to act as a core component of the putative HOPS and CORVET endosomal tethering complexes which are proposed to be involved in the Rab5-to-Rab7 endosome conversion probably implicating MON1A/B, and via binding SNAREs and SNARE complexes to mediate tethering and docking events during SNARE-mediated membrane fusion. The HOPS complex is proposed to be recruited to Rab7 on the late endosomal membrane and to regulate late endocytic, phagocytic and autophagic traffic towards lysosomes. The CORVET complex is proposed to function as a Rab5 effector to mediate early endosome fusion probably in specific endosome subpopulations. Required for fusion of endosomes and autophagosomes with lysosomes. Involved in dendrite development of Pukinje cells. This chain is Vacuolar protein sorting-associated protein 18 homolog, found in Homo sapiens (Human).